The chain runs to 213 residues: NADH dehydrogenase [ubiquinone] iron-sulfur protein 7, mitochondrial (213 aa).

The N-terminal 38 residues, methionine 1–glycine 38, are a transit peptide targeting the mitochondrion. Residues histidine 31–alanine 53 are disordered. Polar residues predominate over residues serine 33–proline 44. Cysteine 88 and cysteine 89 together coordinate [4Fe-4S] cluster. A Hydroxyarginine modification is found at arginine 111. Residues cysteine 153 and cysteine 183 each coordinate [4Fe-4S] cluster.

It belongs to the complex I 20 kDa subunit family. In terms of assembly, core subunit of respiratory chain NADH dehydrogenase (Complex I) which is composed of 45 different subunits. This is a component of the iron-sulfur (IP) fragment of the enzyme. The cofactor is [4Fe-4S] cluster. Hydroxylated at Arg-111 by NDUFAF5 early in the pathway of assembly of complex I, before the formation of the juncture between peripheral and membrane arms.

It is found in the mitochondrion inner membrane. It catalyses the reaction a ubiquinone + NADH + 5 H(+)(in) = a ubiquinol + NAD(+) + 4 H(+)(out). Functionally, core subunit of the mitochondrial membrane respiratory chain NADH dehydrogenase (Complex I) which catalyzes electron transfer from NADH through the respiratory chain, using ubiquinone as an electron acceptor. Essential for the catalytic activity of complex I. The sequence is that of NADH dehydrogenase [ubiquinone] iron-sulfur protein 7, mitochondrial (NDUFS7) from Homo sapiens (Human).